Reading from the N-terminus, the 182-residue chain is Urease accessory protein UreE (182 aa).

Residues 128 to 182 (PRTEPFRPEGGAYGHGRTLGHDHGPAQGHGHDHPHVHVHISHKPDEDETPDADPA) form a disordered region. Basic and acidic residues predominate over residues 146–162 (LGHDHGPAQGHGHDHPH). The segment covering 173–182 (EDETPDADPA) has biased composition (acidic residues).

This sequence belongs to the UreE family.

The protein resides in the cytoplasm. Involved in urease metallocenter assembly. Binds nickel. Probably functions as a nickel donor during metallocenter assembly. In Cereibacter sphaeroides (strain ATCC 17023 / DSM 158 / JCM 6121 / CCUG 31486 / LMG 2827 / NBRC 12203 / NCIMB 8253 / ATH 2.4.1.) (Rhodobacter sphaeroides), this protein is Urease accessory protein UreE.